The sequence spans 538 residues: Phosphoenolpyruvate carboxykinase (ATP) (538 aa).

Positions 61, 195, and 201 each coordinate substrate. ATP contacts are provided by residues Lys-201, His-220, and Gly-236 to Thr-244. Mn(2+) is bound by residues Lys-201 and His-220. Mn(2+) is bound at residue Asp-257. 3 residues coordinate ATP: Glu-285, Arg-323, and Thr-449. Residue Arg-323 participates in substrate binding.

This sequence belongs to the phosphoenolpyruvate carboxykinase (ATP) family. Mn(2+) serves as cofactor.

It localises to the cytoplasm. It catalyses the reaction oxaloacetate + ATP = phosphoenolpyruvate + ADP + CO2. It functions in the pathway carbohydrate biosynthesis; gluconeogenesis. Its function is as follows. Involved in the gluconeogenesis. Catalyzes the conversion of oxaloacetate (OAA) to phosphoenolpyruvate (PEP) through direct phosphoryl transfer between the nucleoside triphosphate and OAA. In Afipia carboxidovorans (strain ATCC 49405 / DSM 1227 / KCTC 32145 / OM5) (Oligotropha carboxidovorans), this protein is Phosphoenolpyruvate carboxykinase (ATP).